Reading from the N-terminus, the 648-residue chain is Nucleoside triphosphatase I (648 aa).

The 166-residue stretch at 48–213 folds into the Helicase ATP-binding domain; sequence FIGLKNLNSM…NNLIGLLRPN (166 aa). Position 61–68 (61–68) interacts with ATP; sequence WDTGTGKT. Positions 151 to 154 match the DEXH box motif; sequence DEVH. The region spanning 379–542 is the Helicase C-terminal domain; that stretch reads YIEACRIILN…KINVVFDLLK (164 aa). A binding to the cap-specific mRNA (nucleoside-2'-O-)-methyltransferase region spans residues 468–534; that stretch reads DIIILDMPWN…DIIKNKQGKI (67 aa).

It belongs to the helicase family. NPH I subfamily. Monomer. Interacts (via C-terminus) with RAP94 (via N-terminus). Interacts with the cap-specific mRNA (nucleoside-2'-O-)-methyltransferase.

It localises to the virion. The enzyme catalyses a ribonucleoside 5'-triphosphate + H2O = a ribonucleoside 5'-diphosphate + phosphate + H(+). In terms of biological role, DNA-dependent ATPase required for providing the needed energy to achieve the termination of early transcripts. Acts in concert with the RAP94 subunit of the virion RNA polymerase and the capping enzyme/VTF to catalyze release of UUUUUNU-containing nascent RNA from the elongation complex. NPH-I must bind ssDNA in order to exhibit ATPase activity. The sequence is that of Nucleoside triphosphatase I (NPH1) from Choristoneura fumiferana (Spruce budworm moth).